The following is a 499-amino-acid chain: Centrosomal protein of 57 kDa (499 aa).

Residues 1-16 (MAAASVSAASDSQFSS) are compositionally biased toward low complexity. Residues 1–41 (MAAASVSAASDSQFSSVLAEPSRSNGNMVHHSSSPYVLYPP) form a disordered region. A compositionally biased stretch (polar residues) spans 22-35 (SRSNGNMVHHSSSP). Position 53 is a phosphoserine (S53). The segment at 58 to 239 (TFAYPESNSR…RAAELQSGIE (182 aa)) is centrosome localization domain (CLD). The stretch at 63–242 (ESNSRAIFSA…ELQSGIEANR (180 aa)) forms a coiled coil. Disordered regions lie at residues 255-275 (TSTR…GFRN) and 424-476 (LEKQ…SRKN). The segment at 278-490 (GAQPHYRLCL…KDMQTLQNSL (213 aa)) is mediates interaction with microtubules. A coiled-coil region spans residues 388–491 (PSEELKDNLE…DMQTLQNSLQ (104 aa)). The span at 427–443 (QSTDKQKELKGNKKTLD) shows a compositional bias: basic and acidic residues. Low complexity predominate over residues 448 to 458 (SSSRSSVITRT). Residues 460 to 474 (SKKDFTKQRPGEKSR) show a composition bias toward basic and acidic residues.

Belongs to the translokin family. As to quaternary structure, homodimer and homooligomer. Interacts with FGF2 and RAP80. Does not interact with FGF1 or FGF2 isoform 24 kDa. Interacts with microtubules. Ubiquitous (at protein level).

The protein localises to the nucleus. The protein resides in the cytoplasm. It localises to the cytoskeleton. It is found in the microtubule organizing center. Its subcellular location is the centrosome. Functionally, centrosomal protein which may be required for microtubule attachment to centrosomes. May act by forming ring-like structures around microtubules. Mediates nuclear translocation and mitogenic activity of the internalized growth factor FGF2. The sequence is that of Centrosomal protein of 57 kDa (Cep57) from Rattus norvegicus (Rat).